Here is a 120-residue protein sequence, read N- to C-terminus: Large ribosomal subunit protein bL12 (120 aa).

The protein belongs to the bacterial ribosomal protein bL12 family. In terms of assembly, homodimer. Part of the ribosomal stalk of the 50S ribosomal subunit. Forms a multimeric L10(L12)X complex, where L10 forms an elongated spine to which 2 to 4 L12 dimers bind in a sequential fashion. Binds GTP-bound translation factors.

Its function is as follows. Forms part of the ribosomal stalk which helps the ribosome interact with GTP-bound translation factors. Is thus essential for accurate translation. The protein is Large ribosomal subunit protein bL12 of Lachnoclostridium phytofermentans (strain ATCC 700394 / DSM 18823 / ISDg) (Clostridium phytofermentans).